An 864-amino-acid chain; its full sequence is N-alpha-acetyltransferase 16, NatA auxiliary subunit (864 aa).

7 TPR repeats span residues 46 to 79, 80 to 113, 148 to 184, 224 to 257, 374 to 407, 408 to 441, and 485 to 514; these read GETL…DVRS, HVCW…DKDN, RASW…PPNK, LLVE…NAEN, IWVQ…TPTL, IELF…DTAD, and MWFE…VERH. Residues 594 to 646 are disordered; the sequence is KMLSKQRRAQKKAKVEEERKHTERERQQKNQKKKREEEEEVTSGHKEELIPEK. The span at 595–605 shows a compositional bias: basic residues; it reads MLSKQRRAQKK. Basic and acidic residues-rich tracts occupy residues 606–621 and 635–646; these read AKVE…ERQQ and TSGHKEELIPEK.

As to quaternary structure, component of the N-terminal acetyltransferase A (NatA) complex composed of NAA10 and NAA16. In terms of tissue distribution, highest levels in the kidney and testes. Moderate expression in the liver, thymus and skin.

In terms of biological role, auxillary subunit of the N-terminal acetyltransferase A (NatA) complex which displays alpha (N-terminal) acetyltransferase activity. This is N-alpha-acetyltransferase 16, NatA auxiliary subunit (Naa16) from Mus musculus (Mouse).